The sequence spans 608 residues: Glutamine--fructose-6-phosphate aminotransferase [isomerizing] (608 aa).

Cys2 (nucleophile; for GATase activity) is an active-site residue. Positions Cys2–Asp218 constitute a Glutamine amidotransferase type-2 domain. SIS domains lie at Met284–Thr423 and Met456–Pro598. The active-site For Fru-6P isomerization activity is Lys603.

Homodimer.

The protein localises to the cytoplasm. The enzyme catalyses D-fructose 6-phosphate + L-glutamine = D-glucosamine 6-phosphate + L-glutamate. In terms of biological role, catalyzes the first step in hexosamine metabolism, converting fructose-6P into glucosamine-6P using glutamine as a nitrogen source. The sequence is that of Glutamine--fructose-6-phosphate aminotransferase [isomerizing] from Gluconobacter oxydans (strain 621H) (Gluconobacter suboxydans).